Consider the following 465-residue polypeptide: Ribosomal oxygenase 2 (465 aa).

The JmjC domain occupies 139–271 (QPQRFKDELW…NSWGDYLLDS (133 aa)). H179, D181, and H240 together coordinate Fe cation. Position 309 is a phosphoserine (S309).

This sequence belongs to the ROX family. MINA53 subfamily. Fe(2+) is required as a cofactor.

It is found in the nucleus. It localises to the nucleolus. The catalysed reaction is L-histidyl-[ribosomal protein uL15] + 2-oxoglutarate + O2 = (3S)-3-hydroxy-L-histidyl-[ribosomal protein uL15] + succinate + CO2. It catalyses the reaction L-histidyl-[protein] + 2-oxoglutarate + O2 = (3S)-3-hydroxy-L-histidyl-[protein] + succinate + CO2. Functionally, oxygenase that can act as both a histone lysine demethylase and a ribosomal histidine hydroxylase. Is involved in the demethylation of trimethylated 'Lys-9' on histone H3 (H3K9me3), leading to an increase in ribosomal RNA expression. Also catalyzes the hydroxylation of 60S ribosomal protein L27a on 'His-39'. May play an important role in cell growth and survival. May be involved in ribosome biogenesis, most likely during the assembly process of pre-ribosomal particles. The polypeptide is Ribosomal oxygenase 2 (Rattus norvegicus (Rat)).